A 314-amino-acid polypeptide reads, in one-letter code: Epithelial-stromal interaction protein 1 (314 aa).

Disordered regions lie at residues 1-72 (MYTR…PNES), 227-272 (WAGS…RAQI), and 289-314 (QGKSQPGGLEQSGGCCNMNSTDSWGL). Residues 18–30 (SRDHAGAGQRREL) show a composition bias toward basic and acidic residues. Phosphoserine is present on Ser-39. A coiled-coil region spans residues 71 to 180 (ESRRQKIQRI…QEDIRRATFR (110 aa)). Residues 232-272 (AHRDSPQKEDNPRLQKTRDGHQKNKLLETKGQHQEEERAQI) are compositionally biased toward basic and acidic residues. Polar residues predominate over residues 305 to 314 (NMNSTDSWGL).

Expressed in the spleen, with expression in T cells, B cells, natural killer cells and natural killer T cells and high expression in monocytes and macrophages.

Plays a role in M1 macrophage polarization and is required for the proper regulation of gene expression during M1 versus M2 macrophage differentiation. Might play a role in RELA/p65 and STAT1 phosphorylation and nuclear localization upon activation of macrophages. The protein is Epithelial-stromal interaction protein 1 (Epsti1) of Mus musculus (Mouse).